Here is a 288-residue protein sequence, read N- to C-terminus: Light-independent protochlorophyllide reductase iron-sulfur ATP-binding protein (288 aa).

Residues 10–15 and lysine 39 contribute to the ATP site; that span reads GIGKST. Residue serine 14 coordinates Mg(2+). 2 residues coordinate [4Fe-4S] cluster: cysteine 95 and cysteine 129. Residue 180–181 participates in ATP binding; that stretch reads NR.

Belongs to the NifH/BchL/ChlL family. Homodimer. Protochlorophyllide reductase is composed of three subunits; ChlL, ChlN and ChlB. [4Fe-4S] cluster serves as cofactor.

The protein localises to the plastid. The protein resides in the chloroplast. It catalyses the reaction chlorophyllide a + oxidized 2[4Fe-4S]-[ferredoxin] + 2 ADP + 2 phosphate = protochlorophyllide a + reduced 2[4Fe-4S]-[ferredoxin] + 2 ATP + 2 H2O. The protein operates within porphyrin-containing compound metabolism; chlorophyll biosynthesis (light-independent). In terms of biological role, component of the dark-operative protochlorophyllide reductase (DPOR) that uses Mg-ATP and reduced ferredoxin to reduce ring D of protochlorophyllide (Pchlide) to form chlorophyllide a (Chlide). This reaction is light-independent. The L component serves as a unique electron donor to the NB-component of the complex, and binds Mg-ATP. In Chara vulgaris (Common stonewort), this protein is Light-independent protochlorophyllide reductase iron-sulfur ATP-binding protein.